A 104-amino-acid chain; its full sequence is Large ribosomal subunit protein uL24 (104 aa).

The protein belongs to the universal ribosomal protein uL24 family. As to quaternary structure, part of the 50S ribosomal subunit.

One of two assembly initiator proteins, it binds directly to the 5'-end of the 23S rRNA, where it nucleates assembly of the 50S subunit. In terms of biological role, one of the proteins that surrounds the polypeptide exit tunnel on the outside of the subunit. The chain is Large ribosomal subunit protein uL24 from Pseudomonas fluorescens (strain Pf0-1).